Here is a 620-residue protein sequence, read N- to C-terminus: Glutathione-regulated potassium-efflux system protein KefC (620 aa).

Helical transmembrane passes span 4–24, 26–46, 54–74, 90–110, 114–134, 149–169, 178–198, 218–238, 270–290, 294–314, 327–347, and 359–379; these read HTLI…PIAV, LGLG…PWGL, SILH…GLEL, GALQ…LLGL, VAEL…MQAM, FAVL…IPLL, MGAF…VVLL, VFSA…EEVG, GLLL…GTLL, LRIV…LWLI, WFAV…GAAQ, and SLTL…VILN. The region spanning 399–518 is the RCK N-terminal domain; it reads QPRVIIAGFG…AGVEKPERET (120 aa). The tract at residues 597–620 is disordered; the sequence is GWQGTEEGKHTGNMADEPETKPSS.

It belongs to the monovalent cation:proton antiporter 2 (CPA2) transporter (TC 2.A.37) family. KefC subfamily. As to quaternary structure, homodimer. Interacts with the regulatory subunit KefF.

Its subcellular location is the cell inner membrane. Pore-forming subunit of a potassium efflux system that confers protection against electrophiles. Catalyzes K(+)/H(+) antiport. This chain is Glutathione-regulated potassium-efflux system protein KefC, found in Escherichia coli O8 (strain IAI1).